Consider the following 120-residue polypeptide: Large ribosomal subunit protein uL18 (120 aa).

It belongs to the universal ribosomal protein uL18 family. As to quaternary structure, part of the 50S ribosomal subunit; part of the 5S rRNA/L5/L18/L25 subcomplex. Contacts the 5S and 23S rRNAs.

Its function is as follows. This is one of the proteins that bind and probably mediate the attachment of the 5S RNA into the large ribosomal subunit, where it forms part of the central protuberance. The polypeptide is Large ribosomal subunit protein uL18 (Methylobacterium radiotolerans (strain ATCC 27329 / DSM 1819 / JCM 2831 / NBRC 15690 / NCIMB 10815 / 0-1)).